Here is a 275-residue protein sequence, read N- to C-terminus: 2-dehydro-3-deoxyphosphooctonate aldolase (275 aa).

It belongs to the KdsA family.

The protein resides in the cytoplasm. The catalysed reaction is D-arabinose 5-phosphate + phosphoenolpyruvate + H2O = 3-deoxy-alpha-D-manno-2-octulosonate-8-phosphate + phosphate. Its pathway is carbohydrate biosynthesis; 3-deoxy-D-manno-octulosonate biosynthesis; 3-deoxy-D-manno-octulosonate from D-ribulose 5-phosphate: step 2/3. It participates in bacterial outer membrane biogenesis; lipopolysaccharide biosynthesis. In Francisella tularensis subsp. holarctica (strain LVS), this protein is 2-dehydro-3-deoxyphosphooctonate aldolase.